Here is a 315-residue protein sequence, read N- to C-terminus: MQQFLTLGALWTLFNVATTISLPKYSSSQTYFAQSDPNIPVSQVDDTNNFGLKSQYSWDDVVSNLASNEKLFFLQRHGQGWHNVAPSNFSRVDWNCYWAEQSGRDGVVWEDAELTPKGVQQIQNLHQRIKDTPDFPQPEKFFVSPLRRTLQTWNITWNGLPHKTPLIKEFAREIYGIDSESKRHNKTFIHNYVPSFEFESGFTEQDENWSPDKSESDQHCDYRAAVLLQDIFNDSPDEKVISVVLHSGIIYCLLDVVGHRYFPMATGGAIPVVIAIENYNTDYPLNDAWDTFKDWCPNPPASISGTATSTATGSA.

Residues 1–19 form the signal peptide; the sequence is MQQFLTLGALWTLFNVATT. Residue His77 is the Tele-phosphohistidine intermediate of the active site. 2 N-linked (GlcNAc...) asparagine glycosylation sites follow: Asn88 and Asn154. The Proton donor/acceptor role is filled by Glu173. An N-linked (GlcNAc...) asparagine glycan is attached at Asn185. A lipid anchor (GPI-anchor amidated asparagine) is attached at Asn286. Residues 287 to 315 constitute a propeptide, removed in mature form; the sequence is DAWDTFKDWCPNPPASISGTATSTATGSA.

This sequence belongs to the phosphoglycerate mutase family.

The protein resides in the cell membrane. In Candida albicans (strain SC5314 / ATCC MYA-2876) (Yeast), this protein is Phosphomutase-like protein 3 (PGA12).